The following is a 419-amino-acid chain: Creatine kinase S-type, mitochondrial (419 aa).

A mitochondrion-targeting transit peptide spans 1–39; the sequence is MASAFSKLLTGRNASLLFTTLGTSALTTGYLLNRQKVSA. Positions 40–64 are cardiolipin-binding; sequence DAREQHKLFPPSADYPDLRKHNNCM. A Phosphagen kinase N-terminal domain is found at 46–132; that stretch reads KLFPPSADYP…FDPVIKLRHN (87 aa). The 243-residue stretch at 159–401 folds into the Phosphagen kinase C-terminal domain; sequence YVLSSRVRTG…NYLVDCEKKL (243 aa). ATP is bound by residues 162-166 and His225; that span reads SSRVR. A Phosphotyrosine modification is found at Tyr255. ATP is bound by residues Arg270, Arg326, 354 to 359, and Asp369; that span reads RGTGGV. Thr356 carries the post-translational modification Phosphothreonine.

Belongs to the ATP:guanido phosphotransferase family. Exists as an octamer composed of four CKMT2 homodimers.

Its subcellular location is the mitochondrion inner membrane. The enzyme catalyses creatine + ATP = N-phosphocreatine + ADP + H(+). Its function is as follows. Reversibly catalyzes the transfer of phosphate between ATP and various phosphogens (e.g. creatine phosphate). Creatine kinase isoenzymes play a central role in energy transduction in tissues with large, fluctuating energy demands, such as skeletal muscle, heart, brain and spermatozoa. This chain is Creatine kinase S-type, mitochondrial (Ckmt2), found in Mus musculus (Mouse).